Here is a 457-residue protein sequence, read N- to C-terminus: Cysteine--tRNA ligase (457 aa).

Residue cysteine 30 coordinates Zn(2+). Residues 32–42 (PTVYAPAHIGN) carry the 'HIGH' region motif. 3 residues coordinate Zn(2+): cysteine 221, histidine 246, and glutamate 250. A 'KMSKS' region motif is present at residues 278–282 (KMSKS). ATP is bound at residue lysine 281.

It belongs to the class-I aminoacyl-tRNA synthetase family. As to quaternary structure, monomer. Zn(2+) serves as cofactor.

It is found in the cytoplasm. It catalyses the reaction tRNA(Cys) + L-cysteine + ATP = L-cysteinyl-tRNA(Cys) + AMP + diphosphate. This Opitutus terrae (strain DSM 11246 / JCM 15787 / PB90-1) protein is Cysteine--tRNA ligase.